The primary structure comprises 272 residues: Ras-related protein RSR1 (272 aa).

A GTP-binding site is contributed by 10 to 17 (GAGGVGKS). Positions 32–40 (YDPTIEDSY) match the Effector region motif. Residues 57-61 (DTAGI) and 116-119 (NKAD) contribute to the GTP site. Positions 177–272 (DARNQSQQFS…KKNASTCTIL (96 aa)) are disordered. Composition is skewed to polar residues over residues 180-232 (NQSQ…STPV) and 245-258 (SGSS…ATSQ). Cysteine 269 is modified (cysteine methyl ester). Cysteine 269 carries the S-geranylgeranyl cysteine lipid modification. A propeptide spans 270–272 (TIL) (removed in mature form).

This sequence belongs to the small GTPase superfamily. Ras family.

The protein resides in the cell membrane. It catalyses the reaction GTP + H2O = GDP + phosphate + H(+). With respect to regulation, alternates between an inactive form bound to GDP and an active form bound to GTP. Activated by a guanine nucleotide-exchange factor (GEF) and inactivated by a GTPase-activating protein (GAP). Its function is as follows. Ras-related protein which binds GDP/GTP and possesses intrinsic GTPase activity. Involved in development of cell polarity during the cell division cycle, and essential for bud emergence. The polypeptide is Ras-related protein RSR1 (Saccharomyces cerevisiae (strain ATCC 204508 / S288c) (Baker's yeast)).